We begin with the raw amino-acid sequence, 345 residues long: Biotin synthase (345 aa).

The Radical SAM core domain occupies 38–256; sequence RQVQVSTLLS…IAVARIMMPS (219 aa). [4Fe-4S] cluster is bound by residues Cys53, Cys57, and Cys60. Positions 97, 128, 188, and 260 each coordinate [2Fe-2S] cluster.

The protein belongs to the radical SAM superfamily. Biotin synthase family. As to quaternary structure, homodimer. It depends on [4Fe-4S] cluster as a cofactor. Requires [2Fe-2S] cluster as cofactor.

The enzyme catalyses (4R,5S)-dethiobiotin + (sulfur carrier)-SH + 2 reduced [2Fe-2S]-[ferredoxin] + 2 S-adenosyl-L-methionine = (sulfur carrier)-H + biotin + 2 5'-deoxyadenosine + 2 L-methionine + 2 oxidized [2Fe-2S]-[ferredoxin]. Its pathway is cofactor biosynthesis; biotin biosynthesis; biotin from 7,8-diaminononanoate: step 2/2. Catalyzes the conversion of dethiobiotin (DTB) to biotin by the insertion of a sulfur atom into dethiobiotin via a radical-based mechanism. The sequence is that of Biotin synthase from Yersinia pestis bv. Antiqua (strain Antiqua).